The primary structure comprises 394 residues: Protein arginine N-methyltransferase 8 (394 aa).

Glycine 2 carries N-myristoyl glycine lipidation. A disordered region spans residues 21–40 (VESTEVSSAPPQPPQPVIPA). 2 consecutive short sequence motifs (SH3-binding) follow at residues 29–42 (APPQ…PAKP) and 53–58 (PSCPGR). Residues 30-39 (PPQPPQPVIP) are compositionally biased toward pro residues. An Omega-N-methylarginine; by PRMT8 modification is found at arginine 58. An Asymmetric dimethylarginine; by PRMT8 modification is found at arginine 73. One can recognise an SAM-dependent MTase PRMT-type domain in the interval 73–394 (RDYYFDSYAH…TSVSNDYKMR (322 aa)). Residues histidine 86, arginine 95, glycine 119, 119-122 (GSGT), glutamate 141, and glutamate 170 contribute to the S-adenosyl-L-methionine site. Residues glutamate 185 and glutamate 194 contribute to the active site.

The protein belongs to the class I-like SAM-binding methyltransferase superfamily. Protein arginine N-methyltransferase family. PRMT8 subfamily. Homodimer. Tetramer; individual homodimers associates to form a homotetramer. Homooctamer; individual homodimers associates to form a homooctamer and homooligomerization is required for proper localization to the cell membrane. Heterodimer with PRMT1; heterodimerization may recruit PRMT1 activity to the plasma membrane. Interacts with PRMT2 (via the SH3 domain). Interacts with FYN (via the SH3 domain). Interacts with EWS; independently of EWS methylation status. As to expression, brain-specific. Only expressed in neurons, especially in the somatosensory and limbic systems, and a part of motor system. Highly expressed in all of the regions related to general somatosensory system. Expressed in most of the relay nuclei intervening the special somatosensory system, such as the auditory, visual and vestibular systems. Also present in forebrain limbic areas and thalamic nuclei relevant to limbic areas and in areas related to the motor system, such as the caudate putamen, Purkinje cells, inferior olivary nucleus and cerebellar nuclei.

The protein localises to the cell membrane. It catalyses the reaction L-arginyl-[protein] + S-adenosyl-L-methionine = N(omega)-methyl-L-arginyl-[protein] + S-adenosyl-L-homocysteine + H(+). The enzyme catalyses L-arginyl-[protein] + 2 S-adenosyl-L-methionine = N(omega),N(omega)-dimethyl-L-arginyl-[protein] + 2 S-adenosyl-L-homocysteine + 2 H(+). Its function is as follows. S-adenosyl-L-methionine-dependent and membrane-associated arginine methyltransferase that can both catalyze the formation of omega-N monomethylarginine (MMA) and asymmetrical dimethylarginine (aDMA) in proteins such as NIFK, myelin basic protein, histone H4, H2A and H2A/H2B dimer. Able to mono- and dimethylate EWS protein; however its precise role toward EWS remains unclear as it still interacts with fully methylated EWS. In Mus musculus (Mouse), this protein is Protein arginine N-methyltransferase 8.